Here is a 438-residue protein sequence, read N- to C-terminus: Enolase (438 aa).

Substrate is bound by residues histidine 159 and glutamate 168. Residue glutamate 211 is the Proton donor of the active site. Residues aspartate 246, glutamate 297, and aspartate 322 each contribute to the Mg(2+) site. Glutamate 297 and aspartate 322 together coordinate substrate. Residue lysine 347 is the Proton acceptor of the active site. Substrate contacts are provided by residues 374 to 377 (SHRS) and lysine 398.

The protein belongs to the enolase family. As to quaternary structure, homodimer. Requires Mg(2+) as cofactor.

The protein resides in the cytoplasm. The enzyme catalyses (2R)-2-phosphoglycerate = phosphoenolpyruvate + H2O. The protein operates within carbohydrate degradation; glycolysis; pyruvate from D-glyceraldehyde 3-phosphate: step 4/5. Its function is as follows. Involved in osmoadaptation. In Emericella nidulans (strain FGSC A4 / ATCC 38163 / CBS 112.46 / NRRL 194 / M139) (Aspergillus nidulans), this protein is Enolase (enoA).